The following is a 469-amino-acid chain: UDP-N-acetylmuramate--L-alanine ligase (469 aa).

112–118 (GTHGKTT) contacts ATP.

The protein belongs to the MurCDEF family.

Its subcellular location is the cytoplasm. It catalyses the reaction UDP-N-acetyl-alpha-D-muramate + L-alanine + ATP = UDP-N-acetyl-alpha-D-muramoyl-L-alanine + ADP + phosphate + H(+). It functions in the pathway cell wall biogenesis; peptidoglycan biosynthesis. Functionally, cell wall formation. This Leptothrix cholodnii (strain ATCC 51168 / LMG 8142 / SP-6) (Leptothrix discophora (strain SP-6)) protein is UDP-N-acetylmuramate--L-alanine ligase.